The primary structure comprises 283 residues: D-alanine aminotransferase (283 aa).

Position 31 (Y31) interacts with substrate. A pyridoxal 5'-phosphate-binding site is contributed by R50. The substrate site is built by R98 and H100. K144 (proton acceptor) is an active-site residue. K144 carries the post-translational modification N6-(pyridoxal phosphate)lysine. Position 176 (E176) interacts with pyridoxal 5'-phosphate.

Belongs to the class-IV pyridoxal-phosphate-dependent aminotransferase family. Homodimer. Pyridoxal 5'-phosphate is required as a cofactor.

The enzyme catalyses D-alanine + 2-oxoglutarate = D-glutamate + pyruvate. Acts on the D-isomers of alanine, leucine, aspartate, glutamate, aminobutyrate, norvaline and asparagine. The enzyme transfers an amino group from a substrate D-amino acid to the pyridoxal phosphate cofactor to form pyridoxamine and an alpha-keto acid in the first half-reaction. The second half-reaction is the reverse of the first, transferring the amino group from the pyridoxamine to a second alpha-keto acid to form the product D-amino acid via a ping-pong mechanism. This is an important process in the formation of D-alanine and D-glutamate, which are essential bacterial cell wall components. This is D-alanine aminotransferase (dat) from Bacillus licheniformis.